A 131-amino-acid polypeptide reads, in one-letter code: SPbeta prophage-derived uncharacterized protein YosD (131 aa).

The tract at residues 102 to 131 (EHNNKKAKNNDTQNQRQIKTSWWQRLTKKD) is disordered. Residues 111–125 (NDTQNQRQIKTSWWQ) show a composition bias toward polar residues.

This chain is SPbeta prophage-derived uncharacterized protein YosD (yosD), found in Bacillus subtilis (strain 168).